The following is a 102-amino-acid chain: ATP-dependent Clp protease adapter protein ClpS (102 aa).

Belongs to the ClpS family. Binds to the N-terminal domain of the chaperone ClpA.

Functionally, involved in the modulation of the specificity of the ClpAP-mediated ATP-dependent protein degradation. This is ATP-dependent Clp protease adapter protein ClpS from Wolinella succinogenes (strain ATCC 29543 / DSM 1740 / CCUG 13145 / JCM 31913 / LMG 7466 / NCTC 11488 / FDC 602W) (Vibrio succinogenes).